We begin with the raw amino-acid sequence, 462 residues long: Probable Xaa-Pro aminopeptidase pepP (462 aa).

4 residues coordinate Mn(2+): aspartate 259, aspartate 270, glutamate 393, and glutamate 433.

The protein belongs to the peptidase M24B family. The cofactor is Mn(2+).

The enzyme catalyses Release of any N-terminal amino acid, including proline, that is linked to proline, even from a dipeptide or tripeptide.. In terms of biological role, catalyzes the removal of a penultimate prolyl residue from the N-termini of peptides. This is Probable Xaa-Pro aminopeptidase pepP (pepP) from Metarhizium robertsii (strain ARSEF 23 / ATCC MYA-3075) (Metarhizium anisopliae (strain ARSEF 23)).